Reading from the N-terminus, the 264-residue chain is MGPKRIPLVAGNWKMNFDHLEATYFVQQLAWNLRAIHFDYKRCEIALMPSFTSLRSVQVAVESDNLKIRYGAQAVSVTSQGAFTGDVSADMIAHLGCSYVIVGHSERRKYHPEDDANIVDQVRAVLAAGMQPILCVGESYEERRKGIELDFAVGQVHDVTRDLSDEEAAKLIVAYEPVWAIGTGMVATPQSAQDAARAIRNDLSDTFGTRVGETVRILYGGSVSSKNAVELINEPDVDGFLIGGSALKVDELTRICKLTLETTA.

A substrate-binding site is contributed by 12–14; that stretch reads NWK. Residue His104 is the Electrophile of the active site. The active-site Proton acceptor is the Glu176. Substrate contacts are provided by residues Gly182, Ser222, and 243–244; that span reads GG.

The protein belongs to the triosephosphate isomerase family. In terms of assembly, homodimer.

Its subcellular location is the cytoplasm. The catalysed reaction is D-glyceraldehyde 3-phosphate = dihydroxyacetone phosphate. It functions in the pathway carbohydrate biosynthesis; gluconeogenesis. Its pathway is carbohydrate degradation; glycolysis; D-glyceraldehyde 3-phosphate from glycerone phosphate: step 1/1. Its function is as follows. Involved in the gluconeogenesis. Catalyzes stereospecifically the conversion of dihydroxyacetone phosphate (DHAP) to D-glyceraldehyde-3-phosphate (G3P). This Bifidobacterium adolescentis (strain ATCC 15703 / DSM 20083 / NCTC 11814 / E194a) protein is Triosephosphate isomerase.